A 1218-amino-acid chain; its full sequence is MLTKFETKSNRVKGLSFHPRRPWILASLHSGVIQMWDYRMGTLLDRFDEHDGPVRGVHFHATQPLFVSGGDDYKIKVWNYKTHRCLFTLHGHLDYIRTVQFHHEYPWIVSASDDQTIRIWNWQSRTCVAVLTGHNHYVMCASFHPKEDLVVSASLDQTVRVWDIGALRKKTVSPADDILRLTQMNTDLFGGVDAVVKYVLEGHDRGVNWASFHPTLPLIVSGADDRQVKLWRMNDTKAWEVDTLRGHMNNVSCVMFHAKQDIIVSNSEDKSIRVWDATKRTGIQTFRREHDRFWILAAHPEMNLLAAGHDNGMIVFKLERERPAFSVSGDTVFYVKDRFLRFFEYSTQKEVQLAPIRRPGSVSLNQSPRTLSYSPTENAVLICSDVDGGSYELYIVPKDSAGRTDYLQEAKKGAGGSAVFVARNRFAVLEKSSNQVLVKNLKNEIVKKSPLPIAMDAIYYAGTGNLLCKAEDRVTIFDLQQRLILGELQAPAVKYVVWSSDMESIALLSKHAVVIANKKLVHRCTLHETIRVKSGAWDENGVFIYTTLNHIKYCLPNGDSGIIKTLDVPIYITRAIGNNIFCLDRDGKNKLITVDASEYIFKLALLRKRYDHVMSMIKNSQLCGQAVISYLQQKGFPEVALHFVKDEKTRFNLALESGNIQIAVASAKEIDDKDHWYRLGIEALRQGNVGIVEYAYQRTKNFERLAFLYLITGYMDKVGFMCKIAGQNNNLMGQFHNALYLGDAMKRVEILENAGQLPLAYITAATHGLTEIADRLAAELGENIPSLPEGKTRSLLIPPAPLTASGDWPLLRVMRGIFEGGLDATGKAELEEDDEAAGADWGDEDLDMVDASEAMANGGDGFDAEEGEANEEDGEEGGWDLEDLELPPEAETPKNAGNALSVVFVAPPPGMPVSQIWTQKSSLAGEHAAAGNFDTAMRLLSRQLGIKNFAPLKPLFLDLHMGSHSYLRALATAPIIPVAVEKGWSESASPNVRGPPALVFTFSQMEDRLKAAYKATTEGKFPEALRQFLNILHTIPLIVVDSRREVDEVKELIEIVREYVLGLRMELKRKELRDDVNRQQELAAYFTNCKLQRVHMRLVLGSAMGLCYKQKNFATAEHFARMLLENNPNESQAKRARQVQQQCSGKKDSCELNYDYRNPFVVCGATYVPIYRGQKDVSCPYCGSRFVPSIEGQLCTICELAVVGADASGLLCSPTQLR.

WD repeat units lie at residues 7–48, 49–88, 91–132, 133–172, 202–241, 246–285, 288–326, 363–404, and 450–489; these read TKSN…DRFD, EHDGPVRGVHFHATQPLFVSGGDDYKIKVWNYKTHRCLFT, GHLD…AVLT, GHNHYVMCASFHPKEDLVVSASLDQTVRVWDIGALRKKTV, GHDRGVNWASFHPTLPLIVSGADDRQVKLWRMNDTKAWEV, GHMNNVSCVMFHAKQDIIVSNSEDKSIRVWDATKRTGIQT, REHDRFWILAAHPEMNLLAAGHDNGMIVFKLERERPAFS, SLNQ…AGRT, and PLPIAMDAIYYAGTGNLLCKAEDRVTIFDLQQRLILGELQ. The tract at residues 854–893 is disordered; that stretch reads AMANGGDGFDAEEGEANEEDGEEGGWDLEDLELPPEAETP. The span at 862–888 shows a compositional bias: acidic residues; sequence FDAEEGEANEEDGEEGGWDLEDLELPP.

In terms of assembly, oligomeric complex that consists of at least the alpha, beta, beta', gamma, delta, epsilon and zeta subunits.

The protein localises to the cytoplasm. It localises to the golgi apparatus membrane. Its subcellular location is the cytoplasmic vesicle. It is found in the COPI-coated vesicle membrane. Functionally, the coatomer is a cytosolic protein complex that binds to dilysine motifs and reversibly associates with Golgi non-clathrin-coated vesicles, which further mediate biosynthetic protein transport from the ER, via the Golgi up to the trans Golgi network. Coatomer complex is required for budding from Golgi membranes, and is essential for the retrograde Golgi-to-ER transport of dilysine-tagged proteins. In Oryza sativa subsp. japonica (Rice), this protein is Coatomer subunit alpha-3.